The chain runs to 409 residues: Arginine deiminase (409 aa).

The active-site Amidino-cysteine intermediate is Cys-399.

The protein belongs to the arginine deiminase family.

Its subcellular location is the cytoplasm. It carries out the reaction L-arginine + H2O = L-citrulline + NH4(+). It participates in amino-acid degradation; L-arginine degradation via ADI pathway; carbamoyl phosphate from L-arginine: step 1/2. This Borrelia recurrentis (strain A1) protein is Arginine deiminase.